The chain runs to 342 residues: Farnesyl pyrophosphate synthase 1 (342 aa).

Residues K48, R51, and Q86 each contribute to the isopentenyl diphosphate site. Positions 93 and 97 each coordinate Mg(2+). R102 contributes to the dimethylallyl diphosphate binding site. R103 provides a ligand contact to isopentenyl diphosphate. Dimethylallyl diphosphate is bound by residues K190, T191, Q229, K246, and K255.

The protein belongs to the FPP/GGPP synthase family. Requires Mg(2+) as cofactor.

The protein resides in the cytoplasm. It catalyses the reaction isopentenyl diphosphate + dimethylallyl diphosphate = (2E)-geranyl diphosphate + diphosphate. The catalysed reaction is isopentenyl diphosphate + (2E)-geranyl diphosphate = (2E,6E)-farnesyl diphosphate + diphosphate. It functions in the pathway isoprenoid biosynthesis; farnesyl diphosphate biosynthesis; farnesyl diphosphate from geranyl diphosphate and isopentenyl diphosphate: step 1/1. The protein operates within isoprenoid biosynthesis; geranyl diphosphate biosynthesis; geranyl diphosphate from dimethylallyl diphosphate and isopentenyl diphosphate: step 1/1. In terms of biological role, catalyzes the sequential condensation of isopentenyl pyrophosphate with the allylic pyrophosphates, dimethylallyl pyrophosphate, and then with the resultant geranylpyrophosphate to the ultimate product farnesyl pyrophosphate. This is Farnesyl pyrophosphate synthase 1 (FPS1) from Parthenium argentatum (Guayule rubber plant).